A 355-amino-acid chain; its full sequence is RNA binding protein fox-1 homolog 1 (355 aa).

The segment at 1 to 123 is disordered; it reads MNCEREQLRG…QPKRLHVSNI (123 aa). Over residues 70 to 112 the composition is skewed to polar residues; the sequence is QSHSEQSAADTSAHTVSGTATTDDSAPTDGQPQTQPSENTENK. One can recognise an RRM domain in the interval 116 to 174; it reads KRLHVSNIPFRFRDPDLRQMFGGFGFVTFENSADADRAREKLHGTVVEGRKIEVNNATA. Arg-298 carries the post-translational modification Asymmetric dimethylarginine.

Binds to the C-terminus of ATXN2.

It is found in the nucleus. It localises to the cytoplasm. Its function is as follows. RNA-binding protein that regulates alternative splicing events by binding to 5'-UGCAUGU-3' elements. Prevents binding of U2AF2 to the 3'-splice site. Regulates alternative splicing of tissue-specific exons and of differentially spliced exons during erythropoiesis. The chain is RNA binding protein fox-1 homolog 1 (RBFOX1) from Bos taurus (Bovine).